A 376-amino-acid polypeptide reads, in one-letter code: Putative F-box protein At2g33200 (376 aa).

Residues 6–53 enclose the F-box domain; it reads YDWSKLCHDILRLILESLHYKDYHRARTVCSNWYTASTTCKRPLYPWR.

This chain is Putative F-box protein At2g33200, found in Arabidopsis thaliana (Mouse-ear cress).